The chain runs to 211 residues: Bcl-2-related ovarian killer protein homolog B (211 aa).

The short motif at 32–44 is the BH4 element; that stretch reads KELCRDFIHSRIT. A BH3 motif is present at residues 67-83; the sequence is VSVVLLKLGDELECMRP. Residues 113 to 132 carry the BH1 motif; sequence EVIAMGITWGKVVAIYAVAA. Residues 165–179 carry the BH2 motif; sequence WLKKRGGWVDILKCV. Residues 190–210 traverse the membrane as a helical segment; that stretch reads WLSTAVLTWREFIKTMYVYLT.

This sequence belongs to the Bcl-2 family. Expressed strongly in ovary and more weakly in eye. Little expression in other tissues examined.

It localises to the membrane. Functionally, may play a role in apoptosis. Does not appear to show pro-apoptotic activity when expressed ectopically in early embryos. The protein is Bcl-2-related ovarian killer protein homolog B (bokb) of Danio rerio (Zebrafish).